Here is a 407-residue protein sequence, read N- to C-terminus: Protein ZNF365 (407 aa).

Ser16 is modified (phosphoserine). The segment at Leu26–His51 adopts a C2H2-type; degenerate zinc-finger fold. A Phosphoserine modification is found at Ser138. Residues Val169 to Ala297 adopt a coiled-coil conformation. Thr175 bears the Phosphothreonine mark. A disordered region spans residues Leu347–Arg392. Residues Ala362–Glu381 are compositionally biased toward basic and acidic residues. The residue at position 369 (Ser369) is a Phosphoserine.

As to quaternary structure, homodimer. Interacts with NDE1 and NDEL1. Does not interact with TUBG1. Interacts with DISC1. Interacts with PARP1. Interacts with MCRS1. In terms of tissue distribution, isoform 1 is expressed in brain. Isoform 2 is expressed in placenta and at low level in lung and liver. Isoform 3 is expressed in kidney and pancreas. Isoform 1 is expressed exclusively in brain.

Its subcellular location is the cytoplasm. The protein localises to the cytoskeleton. The protein resides in the microtubule organizing center. It is found in the centrosome. Functionally, involved in the regulation of neurogenesis. Negatively regulates neurite outgrowth. Involved in the morphogenesis of basket cells in the somatosensory cortex during embryogenesis. Involved in the positive regulation of oligodendrocyte differentiation during postnatal growth. Involved in dendritic arborization, morphogenesis of spine density dendrite, and establishment of postsynaptic dendrite density in cortical pyramidal neurons. Involved in homologous recombination (HR) repair pathway. Required for proper resolution of DNA double-strand breaks (DSBs) by HR. Is required for recovery of stalled replication forks, and directly contributes to genomic stability. Interacts with PARP1 and mediates MRE11-dependent DNA end resection during replication fork recovery. Contributes to genomic stability by preventing telomere dysfunction. The sequence is that of Protein ZNF365 (ZNF365) from Homo sapiens (Human).